The chain runs to 668 residues: Major S-layer protein (668 aa).

A signal peptide spans 1-24 (MKRFAAVTLAALMLLTVFASAASA). Residues asparagine 36, asparagine 65, asparagine 111, asparagine 265, asparagine 583, asparagine 596, asparagine 602, asparagine 608, asparagine 617, and asparagine 635 are each glycosylated (N-linked (GlcNAc...) asparagine). The disordered stretch occupies residues 584–650 (ETTSITKPDE…ESNGSPGFGV (67 aa)). A compositionally biased stretch (polar residues) spans 596–611 (NETVSDNETMPDNTSS). The span at 631–641 (EPTDNETEPDE) shows a compositional bias: acidic residues. The helical transmembrane segment at 644-664 (GSPGFGVVLGLAGLLGVVYLV) threads the bilayer.

Belongs to the Methanosarcinales S-layer protein family. Glycosylated.

The protein resides in the secreted. The protein localises to the cell wall. It is found in the S-layer. Its subcellular location is the cell membrane. Its function is as follows. S-layer protein. The S-layer is a paracrystalline mono-layered assembly of proteins which coat the surface of the cell. In Methanosarcina barkeri (strain Fusaro / DSM 804), this protein is Major S-layer protein.